Reading from the N-terminus, the 102-residue chain is Small ribosomal subunit protein uS10 (102 aa).

It belongs to the universal ribosomal protein uS10 family. As to quaternary structure, part of the 30S ribosomal subunit.

Functionally, involved in the binding of tRNA to the ribosomes. The sequence is that of Small ribosomal subunit protein uS10 from Clostridium kluyveri (strain NBRC 12016).